The following is a 283-amino-acid chain: Aldo-keto reductase Mmcs_1938 (283 aa).

Y58 acts as the Proton donor in catalysis. 11 residues coordinate NADPH: G196, L198, V200, I236, R238, S239, A240, R244, S247, N248, and R274.

It belongs to the aldo/keto reductase family.

In Mycobacterium sp. (strain MCS), this protein is Aldo-keto reductase Mmcs_1938.